We begin with the raw amino-acid sequence, 419 residues long: Gamma-glutamyl phosphate reductase (419 aa).

The protein belongs to the gamma-glutamyl phosphate reductase family.

Its subcellular location is the cytoplasm. It carries out the reaction L-glutamate 5-semialdehyde + phosphate + NADP(+) = L-glutamyl 5-phosphate + NADPH + H(+). The protein operates within amino-acid biosynthesis; L-proline biosynthesis; L-glutamate 5-semialdehyde from L-glutamate: step 2/2. Its function is as follows. Catalyzes the NADPH-dependent reduction of L-glutamate 5-phosphate into L-glutamate 5-semialdehyde and phosphate. The product spontaneously undergoes cyclization to form 1-pyrroline-5-carboxylate. The chain is Gamma-glutamyl phosphate reductase from Caldicellulosiruptor bescii (strain ATCC BAA-1888 / DSM 6725 / KCTC 15123 / Z-1320) (Anaerocellum thermophilum).